The following is a 490-amino-acid chain: uncharacterized protein (490 aa).

A helical transmembrane segment spans residues 27-47 (VYVFLTTIILLLSLISTLIII).

The protein localises to the membrane. This is an uncharacterized protein from Borreliella burgdorferi (strain ATCC 35210 / DSM 4680 / CIP 102532 / B31) (Borrelia burgdorferi).